Consider the following 635-residue polypeptide: Threonine--tRNA ligase (635 aa).

Residues 1–144 are editing domain; the sequence is MQLLLIHSDY…RTIRLEGAVP (144 aa). The tract at residues 215–514 is catalytic; the sequence is PHVELMRRLE…AEEGKVPNLP (300 aa). Residues C307, H359, and H483 each contribute to the Zn(2+) site.

It belongs to the class-II aminoacyl-tRNA synthetase family. As to quaternary structure, homodimer. Requires Zn(2+) as cofactor.

It localises to the cytoplasm. It carries out the reaction tRNA(Thr) + L-threonine + ATP = L-threonyl-tRNA(Thr) + AMP + diphosphate + H(+). Catalyzes the attachment of threonine to tRNA(Thr) in a two-step reaction: L-threonine is first activated by ATP to form Thr-AMP and then transferred to the acceptor end of tRNA(Thr). Also edits incorrectly charged L-seryl-tRNA(Thr). The polypeptide is Threonine--tRNA ligase (Methanococcoides burtonii (strain DSM 6242 / NBRC 107633 / OCM 468 / ACE-M)).